The primary structure comprises 348 residues: Dihydroorotase (348 aa).

Residues H17 and H19 each contribute to the Zn(2+) site. Residues 19–21 and N45 each bind substrate; that span reads HLR. The Zn(2+) site is built by K103, H140, and H178. K103 is modified (N6-carboxylysine). H140 serves as a coordination point for substrate. L223 lines the substrate pocket. D251 lines the Zn(2+) pocket. D251 is a catalytic residue. H255 and A267 together coordinate substrate.

It belongs to the metallo-dependent hydrolases superfamily. DHOase family. Class II DHOase subfamily. Homodimer. Zn(2+) serves as cofactor.

The catalysed reaction is (S)-dihydroorotate + H2O = N-carbamoyl-L-aspartate + H(+). Its pathway is pyrimidine metabolism; UMP biosynthesis via de novo pathway; (S)-dihydroorotate from bicarbonate: step 3/3. Catalyzes the reversible cyclization of carbamoyl aspartate to dihydroorotate. In Yersinia pseudotuberculosis serotype O:1b (strain IP 31758), this protein is Dihydroorotase.